The following is a 240-amino-acid chain: NADPH-flavin oxidoreductase (240 aa).

Residues His11–Arg15, Ser39, Gln67–Tyr69, Tyr128–Gly131, and Lys167–Arg169 contribute to the FMN site.

Belongs to the flavin oxidoreductase frp family. In terms of assembly, homodimer.

It catalyses the reaction FMNH2 + NADP(+) = FMN + NADPH + 2 H(+). Its function is as follows. Catalyzes the NADPH-dependent reduction of FMN to FMNH(2). Involved in bioluminescence by providing FMNH(2) to luciferase. This chain is NADPH-flavin oxidoreductase, found in Vibrio harveyi (Beneckea harveyi).